A 153-amino-acid chain; its full sequence is UPF0225 protein ETA_15740 (153 aa).

It belongs to the UPF0225 family.

The protein is UPF0225 protein ETA_15740 of Erwinia tasmaniensis (strain DSM 17950 / CFBP 7177 / CIP 109463 / NCPPB 4357 / Et1/99).